The following is an 877-amino-acid chain: Phosphoenolpyruvate carboxylase (877 aa).

Active-site residues include His137 and Lys544.

The protein belongs to the PEPCase type 1 family. The cofactor is Mg(2+).

It catalyses the reaction oxaloacetate + phosphate = phosphoenolpyruvate + hydrogencarbonate. Forms oxaloacetate, a four-carbon dicarboxylic acid source for the tricarboxylic acid cycle. This chain is Phosphoenolpyruvate carboxylase, found in Edwardsiella ictaluri (strain 93-146).